Here is a 904-residue protein sequence, read N- to C-terminus: DNA mismatch repair protein MutS (904 aa).

655-662 is an ATP binding site; it reads GPNMGGKS.

It belongs to the DNA mismatch repair MutS family.

Functionally, this protein is involved in the repair of mismatches in DNA. It is possible that it carries out the mismatch recognition step. This protein has a weak ATPase activity. In Rhizorhabdus wittichii (strain DSM 6014 / CCUG 31198 / JCM 15750 / NBRC 105917 / EY 4224 / RW1) (Sphingomonas wittichii), this protein is DNA mismatch repair protein MutS.